The sequence spans 500 residues: Intermediate filament protein ifc-1 (500 aa).

A head region spans residues 1–36 (MSLYGGIPTNLVSGMSSAGAICTTQIRDAREREKRE). Residues 33–383 (EKREIGLLND…VLLNGANVTT (351 aa)) enclose the IF rod domain. Residues 37–68 (IGLLNDRLADYIEKVRFLKAQNHVLSHDIEIL) are coil 1A. Positions 69-81 (RRGFSGGGHISSF) are linker 1. A coil 1B region spans residues 82–219 (FESEISNCTV…TENSSRIEQE (138 aa)). Residues 220-237 (LIYIHRDTTLENRDYFRQ) are linker 12. The segment at 238 to 383 (ELQAAMRDIR…VLLNGANVTT (146 aa)) is coil 2. The segment at 384–496 (YVSNSTGAAG…RHHESSYSYS (113 aa)) is tail.

It belongs to the intermediate filament family.

The protein resides in the cytoplasm. Its function is as follows. Cytoplasmic intermediate filaments provide mechanical strength to cells. Not essential protein. This chain is Intermediate filament protein ifc-1 (ifc-1), found in Caenorhabditis elegans.